The following is a 436-amino-acid chain: MSAPIVAIVGRPNVGKSTIFNRMAGERIAIVEDMPGVTRDRLYAPAEWLNYEFRMIDTGGIEIGDAPFLAEIRGQVELAINEADVIVMVVSGREGLTEADEVVARMLYKSDKPVVLAVNKVDNPEMRHDVYDFYALGLGDPFPVSGSHGLGLGDLLDEIVKHFPDEAAEQEDDAIRFSIIGRPNVGKSSIVNAMLGEKRVIVSDIEGTTRDAIDTRFVTEEGDEFVMVDTAGMRKRGKIYENTEKYSVMRAMKAIDDSNVILMVIDAEAGIREQDKHVAGFAHEAGRAMIIVVNKWDAIEKNDRTMSDFENLIREEFKFLDYAPIVFVSAKTGQRLDRLPQMVKDVDDNHRKRITSSTLNDVIMDAIAINPTPSDNGRRLRVYYATQVATQPPTFVIFVNDVELMHFSYERFLENKIRESFDFTGTPIKLIVRARK.

EngA-type G domains are found at residues proline 4–alanine 167 and isoleucine 175–arginine 351. Residues glycine 10–serine 17, aspartate 57–isoleucine 61, asparagine 119–aspartate 122, glycine 181–serine 188, aspartate 229–methionine 233, and asparagine 294–aspartate 297 contribute to the GTP site. The region spanning lysine 352–lysine 436 is the KH-like domain.

The protein belongs to the TRAFAC class TrmE-Era-EngA-EngB-Septin-like GTPase superfamily. EngA (Der) GTPase family. As to quaternary structure, associates with the 50S ribosomal subunit.

Its function is as follows. GTPase that plays an essential role in the late steps of ribosome biogenesis. The sequence is that of GTPase Der from Leuconostoc mesenteroides subsp. mesenteroides (strain ATCC 8293 / DSM 20343 / BCRC 11652 / CCM 1803 / JCM 6124 / NCDO 523 / NBRC 100496 / NCIMB 8023 / NCTC 12954 / NRRL B-1118 / 37Y).